Reading from the N-terminus, the 215-residue chain is Oligoribonuclease (215 aa).

Residues Leu-5–Leu-170 form the Exonuclease domain. The active site involves Tyr-127. A disordered region spans residues Leu-196–Gly-215.

This sequence belongs to the oligoribonuclease family.

Its subcellular location is the cytoplasm. Functionally, 3'-to-5' exoribonuclease specific for small oligoribonucleotides. The polypeptide is Oligoribonuclease (Mycobacterium bovis (strain BCG / Pasteur 1173P2)).